We begin with the raw amino-acid sequence, 269 residues long: Tryptophan synthase alpha chain (269 aa).

Residues Glu-49 and Asp-60 each act as proton acceptor in the active site.

This sequence belongs to the TrpA family. As to quaternary structure, tetramer of two alpha and two beta chains.

It carries out the reaction (1S,2R)-1-C-(indol-3-yl)glycerol 3-phosphate + L-serine = D-glyceraldehyde 3-phosphate + L-tryptophan + H2O. Its pathway is amino-acid biosynthesis; L-tryptophan biosynthesis; L-tryptophan from chorismate: step 5/5. The alpha subunit is responsible for the aldol cleavage of indoleglycerol phosphate to indole and glyceraldehyde 3-phosphate. The protein is Tryptophan synthase alpha chain of Pseudomonas entomophila (strain L48).